A 475-amino-acid chain; its full sequence is Lactate utilization protein B (475 aa).

4Fe-4S ferredoxin-type domains lie at 304 to 334 (GTEF…GHSY) and 353 to 382 (YDDY…LHEL). 7 residues coordinate [4Fe-4S] cluster: cysteine 313, cysteine 316, cysteine 319, cysteine 323, cysteine 366, cysteine 369, and cysteine 373.

It belongs to the LutB/YkgF family.

Is involved in L-lactate degradation and allows cells to grow with lactate as the sole carbon source. Has probably a role as an electron transporter during oxidation of L-lactate. This chain is Lactate utilization protein B, found in Geobacillus sp. (strain WCH70).